A 636-amino-acid chain; its full sequence is 1-deoxy-D-xylulose-5-phosphate synthase (636 aa).

Residues His-72 and 113–115 (GHA) contribute to the thiamine diphosphate site. Asp-144 is a Mg(2+) binding site. Thiamine diphosphate-binding positions include 145–146 (GS), Asn-174, Tyr-287, and Glu-370. A Mg(2+)-binding site is contributed by Asn-174.

This sequence belongs to the transketolase family. DXPS subfamily. Homodimer. Mg(2+) serves as cofactor. Thiamine diphosphate is required as a cofactor.

It carries out the reaction D-glyceraldehyde 3-phosphate + pyruvate + H(+) = 1-deoxy-D-xylulose 5-phosphate + CO2. The protein operates within metabolic intermediate biosynthesis; 1-deoxy-D-xylulose 5-phosphate biosynthesis; 1-deoxy-D-xylulose 5-phosphate from D-glyceraldehyde 3-phosphate and pyruvate: step 1/1. Functionally, catalyzes the acyloin condensation reaction between C atoms 2 and 3 of pyruvate and glyceraldehyde 3-phosphate to yield 1-deoxy-D-xylulose-5-phosphate (DXP). The chain is 1-deoxy-D-xylulose-5-phosphate synthase from Synechococcus elongatus (strain ATCC 33912 / PCC 7942 / FACHB-805) (Anacystis nidulans R2).